The primary structure comprises 851 residues: Thrombospondin type-1 domain-containing protein 1 (851 aa).

The signal sequence occupies residues 1-24 (MKPMLKDFSNLLLVVLCDYVLGEA). At 25 to 412 (EYLLLQEPVH…SPQDPVKSNN (388 aa)) the chain is on the extracellular side. Asn53, Asn58, Asn69, Asn110, Asn135, and Asn304 each carry an N-linked (GlcNAc...) asparagine glycan. Residues 339-392 (IETWGPWQPWSPCSTTCGDAVRERRRLCVTSFPSRPSCSGMSSETSPCSLEECA) form the TSP type-1 domain. 3 cysteine pairs are disulfide-bonded: Cys351–Cys386, Cys355–Cys391, and Cys366–Cys376. The chain crosses the membrane as a helical span at residues 413–433 (VVTVTGISLCLFIIFATVLIT). Residues 434-851 (LWRRFGRAPK…STLSVEKLVI (418 aa)) lie on the Cytoplasmic side of the membrane. Ser462 is subject to Phosphoserine. 3 disordered regions span residues 471–516 (SEPR…ESFQ), 626–646 (KSQI…HSRS), and 682–777 (SRMR…SSPI). The segment covering 685–695 (RTWDQMEDRCR) has biased composition (basic and acidic residues). Polar residues predominate over residues 765 to 776 (SHRSASRKQSSP).

In terms of assembly, part of a complex composed of THSD1, PTK2/FAK1, TLN1 and VCL. Interacts with TLN1. Expressed in cerebral vascular endothelium.

The protein resides in the endosome membrane. It is found in the cell junction. The protein localises to the focal adhesion. Is a positive regulator of nascent focal adhesion assembly, involved in the modulation of endothelial cell attachment to the extracellular matrix. This is Thrombospondin type-1 domain-containing protein 1 (Thsd1) from Mus musculus (Mouse).